A 333-amino-acid polypeptide reads, in one-letter code: Holliday junction branch migration complex subunit RuvB (333 aa).

The large ATPase domain (RuvB-L) stretch occupies residues 1–181 (MARILDNDLL…FGINGHMEYY (181 aa)). ATP contacts are provided by residues Leu20, Arg21, Gly62, Lys65, Thr66, Thr67, 128 to 130 (EDY), Arg171, Tyr181, and Arg218. Residue Thr66 participates in Mg(2+) binding. Residues 130 to 148 (YYIDIMIGAGETSRSVHLD) form a presensor-1 beta-hairpin region. Residues 182–252 (ELPDLTEIVE…IADQALTMLD (71 aa)) form a small ATPAse domain (RuvB-S) region. The tract at residues 255-333 (HEGLDYVDQK…HMGYDYTRDN (79 aa)) is head domain (RuvB-H). Residues Arg291, Arg310, Arg312, and Arg315 each coordinate DNA.

It belongs to the RuvB family. In terms of assembly, homohexamer. Forms an RuvA(8)-RuvB(12)-Holliday junction (HJ) complex. HJ DNA is sandwiched between 2 RuvA tetramers; dsDNA enters through RuvA and exits via RuvB. Only 4 subunits contact one DNA strand at any time. Two adjacent subunits are contacted by domain III of RuvA. An RuvB hexamer assembles on each DNA strand where it exits the tetramer. Each RuvB hexamer is contacted by two RuvA subunits (via domain III) on 2 adjacent RuvB subunits; this complex drives branch migration. In the full resolvosome a probable DNA-RuvA(4)-RuvB(12)-RuvC(2) complex forms which resolves the HJ.

The protein localises to the cytoplasm. It catalyses the reaction ATP + H2O = ADP + phosphate + H(+). Binding of domain III of RuvA to a single subunit of the RuvB hexamer activates the ATPase 2 subunits away and nucleotide exchange in the adjacent subunit. In terms of biological role, the RuvA-RuvB-RuvC complex processes Holliday junction (HJ) DNA during genetic recombination and DNA repair, while the RuvA-RuvB complex plays an important role in the rescue of blocked DNA replication forks via replication fork reversal (RFR). Catalyzes branch migration on Holliday junction (HJ) DNA in complex with RuvA from S.typhimurim and ATP. RuvA specifically binds to HJ cruciform DNA, conferring on it an open structure. The RuvB hexamer acts as an ATP-dependent pump, pulling dsDNA into and through the RuvAB complex. Forms 2 homohexamers on either side of HJ DNA bound by 1 or 2 RuvA tetramers; 4 subunits per hexamer contact DNA at a time. Coordinated motions by a converter formed by DNA-disengaged RuvB subunits stimulates ATP hydrolysis and nucleotide exchange. Immobilization of the converter enables RuvB to convert the ATP-contained energy into a lever motion, pulling 2 nucleotides of DNA out of the RuvA tetramer per ATP hydrolyzed, thus driving DNA branch migration. The RuvB motors rotate together with the DNA substrate, which together with the progressing nucleotide cycle forms the mechanistic basis for DNA recombination by continuous branch migration. Branch migration allows RuvC to scan DNA until it finds its consensus sequence, where it cleaves and resolves cruciform DNA. This Streptococcus thermophilus (strain ATCC BAA-250 / LMG 18311) protein is Holliday junction branch migration complex subunit RuvB.